A 380-amino-acid polypeptide reads, in one-letter code: Succinyl-diaminopimelate desuccinylase (380 aa).

A Zn(2+)-binding site is contributed by histidine 69. Aspartate 71 is a catalytic residue. Aspartate 102 is a binding site for Zn(2+). Glutamate 135 acts as the Proton acceptor in catalysis. The Zn(2+) site is built by glutamate 136, glutamate 164, and histidine 353.

The protein belongs to the peptidase M20A family. DapE subfamily. Homodimer. Zn(2+) serves as cofactor. The cofactor is Co(2+).

The catalysed reaction is N-succinyl-(2S,6S)-2,6-diaminopimelate + H2O = (2S,6S)-2,6-diaminopimelate + succinate. It participates in amino-acid biosynthesis; L-lysine biosynthesis via DAP pathway; LL-2,6-diaminopimelate from (S)-tetrahydrodipicolinate (succinylase route): step 3/3. Catalyzes the hydrolysis of N-succinyl-L,L-diaminopimelic acid (SDAP), forming succinate and LL-2,6-diaminopimelate (DAP), an intermediate involved in the bacterial biosynthesis of lysine and meso-diaminopimelic acid, an essential component of bacterial cell walls. This Phenylobacterium zucineum (strain HLK1) protein is Succinyl-diaminopimelate desuccinylase.